Consider the following 183-residue polypeptide: uncharacterized protein (183 aa).

Belongs to the isochorismatase family.

This is an uncharacterized protein from Bacillus subtilis (strain 168).